Here is a 261-residue protein sequence, read N- to C-terminus: Probable electron transfer flavoprotein subunit beta (261 aa).

An N-acetylserine modification is found at S2.

The protein belongs to the ETF beta-subunit/FixA family. Heterodimer of an alpha and a beta subunit. Interacts with YFH1. Requires FAD as cofactor. The cofactor is AMP.

The protein localises to the mitochondrion matrix. Its function is as follows. The electron transfer flavoprotein serves as a specific electron acceptor for several dehydrogenases, including five acyl-CoA dehydrogenases, glutaryl-CoA and sarcosine dehydrogenase. It transfers the electrons to the main mitochondrial respiratory chain via ETF-ubiquinone oxidoreductase (ETF dehydrogenase). The sequence is that of Probable electron transfer flavoprotein subunit beta (CIR1) from Saccharomyces cerevisiae (strain ATCC 204508 / S288c) (Baker's yeast).